We begin with the raw amino-acid sequence, 299 residues long: Delta-9 desaturase-like 5 protein (299 aa).

Helical transmembrane passes span 31–51 (ADII…LAPF) and 55–75 (WEAL…ITFS). A Histidine box-1 motif is present at residues 77-82 (HRNLAH). Positions 114–118 (HRFHH) match the Histidine box-2 motif. 2 consecutive transmembrane segments (helical) span residues 174-194 (IGFH…LPYL) and 199-219 (GVGG…CHIW). A Histidine box-3 motif is present at residues 246–250 (HNNHH).

Belongs to the fatty acid desaturase type 1 family. It depends on Fe cation as a cofactor.

It localises to the endoplasmic reticulum membrane. It participates in lipid metabolism; polyunsaturated fatty acid biosynthesis. In Arabidopsis thaliana (Mouse-ear cress), this protein is Delta-9 desaturase-like 5 protein.